A 266-amino-acid chain; its full sequence is UPF0354 protein lmo1608 (266 aa).

It belongs to the UPF0354 family.

The polypeptide is UPF0354 protein lmo1608 (Listeria monocytogenes serovar 1/2a (strain ATCC BAA-679 / EGD-e)).